Reading from the N-terminus, the 164-residue chain is Lipoprotein signal peptidase (164 aa).

The next 3 membrane-spanning stretches (helical) occupy residues 12-32 (WLWLVVVVLIIDLGSKYLILQ), 70-90 (WFFAGIAIGISVILAVMMYRS), and 102-122 (ALIIGGALGNLFDRLWHGFVV). Residues Asp123 and Asp141 contribute to the active site. The helical transmembrane segment at 137 to 157 (FNLADTAICVGAALIVLEGFL) threads the bilayer.

It belongs to the peptidase A8 family.

It localises to the cell inner membrane. The enzyme catalyses Release of signal peptides from bacterial membrane prolipoproteins. Hydrolyzes -Xaa-Yaa-Zaa-|-(S,diacylglyceryl)Cys-, in which Xaa is hydrophobic (preferably Leu), and Yaa (Ala or Ser) and Zaa (Gly or Ala) have small, neutral side chains.. It functions in the pathway protein modification; lipoprotein biosynthesis (signal peptide cleavage). This protein specifically catalyzes the removal of signal peptides from prolipoproteins. The polypeptide is Lipoprotein signal peptidase (Escherichia coli O9:H4 (strain HS)).